The sequence spans 388 residues: Succinate--CoA ligase [ADP-forming] subunit beta (388 aa).

The ATP-grasp domain occupies 9–244 (KQLFARYGLP…QSQEDPRAAQ (236 aa)). ATP is bound by residues lysine 46, 53–55 (GRG), glutamate 99, threonine 102, and glutamate 107. 2 residues coordinate Mg(2+): asparagine 199 and aspartate 213. Substrate-binding positions include asparagine 264 and 321 to 323 (GIV).

It belongs to the succinate/malate CoA ligase beta subunit family. As to quaternary structure, heterotetramer of two alpha and two beta subunits. Mg(2+) serves as cofactor.

The catalysed reaction is succinate + ATP + CoA = succinyl-CoA + ADP + phosphate. It catalyses the reaction GTP + succinate + CoA = succinyl-CoA + GDP + phosphate. The protein operates within carbohydrate metabolism; tricarboxylic acid cycle; succinate from succinyl-CoA (ligase route): step 1/1. Succinyl-CoA synthetase functions in the citric acid cycle (TCA), coupling the hydrolysis of succinyl-CoA to the synthesis of either ATP or GTP and thus represents the only step of substrate-level phosphorylation in the TCA. The beta subunit provides nucleotide specificity of the enzyme and binds the substrate succinate, while the binding sites for coenzyme A and phosphate are found in the alpha subunit. In Shigella flexneri serotype 5b (strain 8401), this protein is Succinate--CoA ligase [ADP-forming] subunit beta.